The primary structure comprises 1358 residues: MAYSYTEKKRIRKDFGKLPQVMDVPYLLAIQLDSYFDFLQQDRAIEERLDVGLHAAFKSVFPIESFSGNAALEYVSYRFGTPAFDVKECQLRGVTYSAPLRVKVRLIIYDKDSSTKAIKDIKEQEVYMGEIPLMTENGTFVVNGTERVIVSQLHRSPGVFFDHDKGKSHSSGKLLYSARIIPYRGSWLDFEFDPKDNVYVRIDRRRKLPATVLLRALGMSAEEILETFFDTSTFHIEKSGFSVELVPSRLRGETATFDIKDGEGNLIVEEGRRITQKHIRQMEKAGLERLDVPMEYLFGKTLAKDQVDPNTGELVCECNTEITPELLEKIGQAGITTLETLYTNDLDTGPFVSDTLKIDTTHSQLEALVEIYRMMRPGEPPTKEAAETLFHNLFFTEDRYDLSGVGRMKFNRRLRREGDTGSGVLDNQDILDVMRELINIRNGFGEVDDIDHLGNRRIRCVGEMAENQFRVGLVRVERAVKERLSMAESEGLMPQDLINAKPVAAAVKEFFGSSQLSQFMDQNNPLSEVTHKRRVSALGPGGLTRERAGFEVRDVHATHYGRLCPIETLEGPNIGLINSLATYSHTNSYGFLETPYRKVVDRQVTDEVVHLSAIEEGDFIIAQASATVDESNKLTDDLVQVRHKGETTFMAPDKVTLMDVSPRQVVSVAAALIPFLEHDDANRALMGSNMQRQAVPTLKAEKPLVGTGMERFVARDSGVCAVARRGGVIDSVDAKRIVVRINEDEIIGGEAGVDIYNLTKYVRSNQNTCMNQRPIVRPGDVVARGDILADGPSVDMGDLALGQNMRMAFMPWNGYNFEDSILISERVVEEDRFTSIHIQELTCVSRDTKLGAEEISSDIPNVGEAALGKLDDAGIVYIGAEVGAGDILVGKVTPKGETQLTPEEKLLRAIFGEKASDVKDTSLRAPTGMKGTVIDVQVFTRDGVEKDSRALSIEQSQLDEVRKDLQETYRIAEEATFERLKRALIGQPVNGGPKLKKGDTLDEAYLDELPRSQWFKLRMQDESLNELLAQADEQLENRRKEMDERFEDKKRKLTQGDDLAPGVLKIVKVYLAVKRRIQSGDKMAGRHGNKGVISSIMPIEDMPFDDNGEPVDVVLNPLGVPSRMNVGQILETHLGMAANGLGVKIDRMLRDARQQQVAEIRDFLGQVYNTAETRQEDIDSLSDDEIITLAKNLRSGVPVATPVFDGAKEHEIKHLLTLADLPDSGQMTLYDGRTGDAFDRQVTVGYMYMLKLNHLVDDKMHARSTGSYSLVTQQPLGGKAQFGGQRFGEMEVWALEAYGAAYTLQEMLTVKSDDVEGRTKMYKNIVDGDHSMQAGMPESFNVLVKEIRSLGIDIELEG.

This sequence belongs to the RNA polymerase beta chain family. As to quaternary structure, the RNAP catalytic core consists of 2 alpha, 1 beta, 1 beta' and 1 omega subunit. When a sigma factor is associated with the core the holoenzyme is formed, which can initiate transcription.

The enzyme catalyses RNA(n) + a ribonucleoside 5'-triphosphate = RNA(n+1) + diphosphate. Its function is as follows. DNA-dependent RNA polymerase catalyzes the transcription of DNA into RNA using the four ribonucleoside triphosphates as substrates. In Chromohalobacter salexigens (strain ATCC BAA-138 / DSM 3043 / CIP 106854 / NCIMB 13768 / 1H11), this protein is DNA-directed RNA polymerase subunit beta.